The sequence spans 112 residues: UPF0102 protein CFF8240_0294 (112 aa).

This sequence belongs to the UPF0102 family.

In Campylobacter fetus subsp. fetus (strain 82-40), this protein is UPF0102 protein CFF8240_0294.